Here is a 229-residue protein sequence, read N- to C-terminus: Small ribosomal subunit protein uS5 (229 aa).

The S5 DRBM domain occupies 61–124 (LEEQVLDVKL…AHAKLSLIKV (64 aa)).

The protein belongs to the universal ribosomal protein uS5 family. Part of the 30S ribosomal subunit. Contacts protein S4.

Functionally, with S4 and S12 plays an important role in translational accuracy. This Methanococcus maripaludis (strain C6 / ATCC BAA-1332) protein is Small ribosomal subunit protein uS5.